A 231-amino-acid polypeptide reads, in one-letter code: Flagellar L-ring protein (231 aa).

An N-terminal signal peptide occupies residues 1 to 20 (MTYRRIPLYLSCLFLLALSG). Residue C21 is the site of N-palmitoyl cysteine attachment. Residue C21 is the site of S-diacylglycerol cysteine attachment.

The protein belongs to the FlgH family. As to quaternary structure, the basal body constitutes a major portion of the flagellar organelle and consists of four rings (L,P,S, and M) mounted on a central rod.

The protein resides in the cell outer membrane. It is found in the bacterial flagellum basal body. In terms of biological role, assembles around the rod to form the L-ring and probably protects the motor/basal body from shearing forces during rotation. This is Flagellar L-ring protein from Desulfotalea psychrophila (strain LSv54 / DSM 12343).